Consider the following 200-residue polypeptide: Protein RISC-INTERACTING CLEARING 3'-5' EXORIBONUCLEASE 1 (200 aa).

Oligomerization stretches follow at residues 35 to 66, 102 to 127, and 166 to 173; these read SKIL…KSEW, KFVT…IVIR, and DSIQSKWD.

The protein belongs to the RICE family. Homohexamer with DnaQ-like exonuclease fold in a ring-shaped structure with a central cavity. Component of AGO1 and AGO10-centered RNA-induced silencing complexes (RISC). Interacts with and acts as a cofactor of AGO1 and AGO10. In terms of tissue distribution, ubiquitously expressed throughout development in germinating seeds, cotyledons, leaves and roots of young seedlings and adult plants, stems and inflorescence.

It localises to the cytoplasm. The enzyme catalyses Exonucleolytic cleavage in the 3'- to 5'-direction to yield nucleoside 5'-phosphates.. Its function is as follows. 3'-to-5' exoribonuclease (RNase) specifically targeting single-stranded RNAs. Triggers miRNA accumulation in RNA-induced silencing complex (RISC), composed of miRNAs and AGO proteins, by degrading uridylated cleavage fragments. Required during plant growth and development. The sequence is that of Protein RISC-INTERACTING CLEARING 3'-5' EXORIBONUCLEASE 1 from Arabidopsis thaliana (Mouse-ear cress).